A 39-amino-acid chain; its full sequence is MANTGRIPLWLVGLVGGLAVITMLGLFIYGSYSGLGSSL.

Residues 9–29 form a helical membrane-spanning segment; it reads LWLVGLVGGLAVITMLGLFIY.

This sequence belongs to the PsbJ family. As to quaternary structure, PSII is composed of 1 copy each of membrane proteins PsbA, PsbB, PsbC, PsbD, PsbE, PsbF, PsbH, PsbI, PsbJ, PsbK, PsbL, PsbM, PsbT, PsbX, PsbY, PsbZ, Psb30/Ycf12, at least 3 peripheral proteins of the oxygen-evolving complex and a large number of cofactors. It forms dimeric complexes.

The protein resides in the plastid. Its subcellular location is the chloroplast thylakoid membrane. One of the components of the core complex of photosystem II (PSII). PSII is a light-driven water:plastoquinone oxidoreductase that uses light energy to abstract electrons from H(2)O, generating O(2) and a proton gradient subsequently used for ATP formation. It consists of a core antenna complex that captures photons, and an electron transfer chain that converts photonic excitation into a charge separation. In Phaeodactylum tricornutum (strain CCAP 1055/1), this protein is Photosystem II reaction center protein J.